A 65-amino-acid chain; its full sequence is Diapause-specific peptide (65 aa).

Residues M1 to A24 form the signal peptide. 3 disulfides stabilise this stretch: C31–C45, C35–C57, and C46–C64.

In terms of tissue distribution, highly expressed in the fat body.

Its subcellular location is the secreted. Its function is as follows. Has antifungal activity against T.rubrum. Blocks voltage-dependent N-type calcium channels (Cav2.2 / CACNA1B). The sequence is that of Diapause-specific peptide from Gastrophysa atrocyanea (Leaf beetle).